We begin with the raw amino-acid sequence, 229 residues long: Biosynthetic peptidoglycan transglycosylase (229 aa).

The chain crosses the membrane as a helical span at residues 14–34 (FITWRFLLVVVLLLLVLLLVL).

It belongs to the glycosyltransferase 51 family.

It is found in the cell inner membrane. It catalyses the reaction [GlcNAc-(1-&gt;4)-Mur2Ac(oyl-L-Ala-gamma-D-Glu-L-Lys-D-Ala-D-Ala)](n)-di-trans,octa-cis-undecaprenyl diphosphate + beta-D-GlcNAc-(1-&gt;4)-Mur2Ac(oyl-L-Ala-gamma-D-Glu-L-Lys-D-Ala-D-Ala)-di-trans,octa-cis-undecaprenyl diphosphate = [GlcNAc-(1-&gt;4)-Mur2Ac(oyl-L-Ala-gamma-D-Glu-L-Lys-D-Ala-D-Ala)](n+1)-di-trans,octa-cis-undecaprenyl diphosphate + di-trans,octa-cis-undecaprenyl diphosphate + H(+). The protein operates within cell wall biogenesis; peptidoglycan biosynthesis. In terms of biological role, peptidoglycan polymerase that catalyzes glycan chain elongation from lipid-linked precursors. The protein is Biosynthetic peptidoglycan transglycosylase of Shewanella denitrificans (strain OS217 / ATCC BAA-1090 / DSM 15013).